Consider the following 105-residue polypeptide: Large ribosomal subunit protein uL24 (105 aa).

This sequence belongs to the universal ribosomal protein uL24 family. In terms of assembly, part of the 50S ribosomal subunit.

One of two assembly initiator proteins, it binds directly to the 5'-end of the 23S rRNA, where it nucleates assembly of the 50S subunit. Its function is as follows. One of the proteins that surrounds the polypeptide exit tunnel on the outside of the subunit. This chain is Large ribosomal subunit protein uL24, found in Chromohalobacter salexigens (strain ATCC BAA-138 / DSM 3043 / CIP 106854 / NCIMB 13768 / 1H11).